Consider the following 402-residue polypeptide: UPF0261 protein y4oU (402 aa).

It belongs to the UPF0261 family.

The sequence is that of UPF0261 protein y4oU from Sinorhizobium fredii (strain NBRC 101917 / NGR234).